Consider the following 187-residue polypeptide: Troponin I, slow skeletal muscle (187 aa).

N-acetylproline is present on Pro2. The interval 2 to 48 (PEVERKSKITASRKLMLKSLMLAKAKECWEQEHEEREAEKVRYLSER) is involved in binding TNC. Position 58 is a phosphoserine (Ser58). The tract at residues 97-118 (LKLKVLDLRGKFKRPPLRRVRV) is involved in binding TNC and actin.

Belongs to the troponin I family. Binds to actin and tropomyosin.

Its function is as follows. Troponin I is the inhibitory subunit of troponin, the thin filament regulatory complex which confers calcium-sensitivity to striated muscle actomyosin ATPase activity. The sequence is that of Troponin I, slow skeletal muscle (Tnni1) from Mus musculus (Mouse).